We begin with the raw amino-acid sequence, 475 residues long: Aspartyl/glutamyl-tRNA(Asn/Gln) amidotransferase subunit B (475 aa).

It belongs to the GatB/GatE family. GatB subfamily. In terms of assembly, heterotrimer of A, B and C subunits.

It carries out the reaction L-glutamyl-tRNA(Gln) + L-glutamine + ATP + H2O = L-glutaminyl-tRNA(Gln) + L-glutamate + ADP + phosphate + H(+). The catalysed reaction is L-aspartyl-tRNA(Asn) + L-glutamine + ATP + H2O = L-asparaginyl-tRNA(Asn) + L-glutamate + ADP + phosphate + 2 H(+). In terms of biological role, allows the formation of correctly charged Asn-tRNA(Asn) or Gln-tRNA(Gln) through the transamidation of misacylated Asp-tRNA(Asn) or Glu-tRNA(Gln) in organisms which lack either or both of asparaginyl-tRNA or glutaminyl-tRNA synthetases. The reaction takes place in the presence of glutamine and ATP through an activated phospho-Asp-tRNA(Asn) or phospho-Glu-tRNA(Gln). The sequence is that of Aspartyl/glutamyl-tRNA(Asn/Gln) amidotransferase subunit B from Chlorobium limicola (strain DSM 245 / NBRC 103803 / 6330).